A 463-amino-acid chain; its full sequence is Proton-coupled folate transporter (463 aa).

The Cytoplasmic portion of the chain corresponds to 1 to 27 (MVSPDDSPEIRDRPRPRRCLLPASVTV). The chain crosses the membrane as a helical span at residues 28 to 46 (EPVIFLSMFALALQGPLAT). Residues 47 to 86 (QYLWDRLSADIGFNGTRTVGCAMNGSKSAGPEQQEVETLT) lie on the Extracellular side of the membrane. N-linked (GlcNAc...) asparagine glycosylation is found at asparagine 60 and asparagine 70. A disulfide bridge links cysteine 67 with cysteine 302. Residues 87 to 112 (AHWSLYINLGGFLVGLFSVMLLGPWS) form a helical membrane-spanning segment. At 113 to 116 (DKVG) the chain is on the cytoplasmic side. Residues 117–139 (RRPVLMLPCIGLALQAAVYLLVM) traverse the membrane as a helical segment. Topologically, residues 140–144 (YQELH) are extracellular. A helical membrane pass occupies residues 145 to 158 (VGYFLIGRFISGIS). Over 159–181 (GDFNMILAGCFAYIADVSDRQSR) the chain is Cytoplasmic. Residues aspartate 160 and glutamate 189 each contribute to the H(+) site. The chain crosses the membrane as a helical span at residues 182-207 (TFRVAVLEACLGIAGMVASIIGGHWR). Residues 208–212 (KAQGY) are Extracellular-facing. The helical transmembrane segment at 213-231 (INPFWLVFAVNLFTALYVY) threads the bilayer. At 232–270 (FCVEESVKDKKPARLFTHRHYQSFFRLFTVQGENNRRRK) the chain is on the cytoplasmic side. A helical membrane pass occupies residues 271-293 (LFLYSLALLVVVTVHMGAKNLFV). Histidine 285 is a binding site for H(+). At 294–306 (LYELSYPLCWDSD) the chain is on the extracellular side. The chain crosses the membrane as a helical span at residues 307–329 (LIGYGSAAEHLTYLSSLAGLRLF). At 330 to 335 (QLCLAD) the chain is on the cytoplasmic side. A helical membrane pass occupies residues 336-355 (SWVAEMGFISNISGLVVISL). Residues 356-359 (ASTT) are Extracellular-facing. Residues 360–380 (PIMFTGYGLRFFAMATTPVIR) traverse the membrane as a helical segment. Topologically, residues 381–392 (SKLSKMVEEGEQ) are cytoplasmic. The helical transmembrane segment at 393–418 (GALFSSVACVEGLSFLLATGLFNSLY) threads the bilayer. At 419–426 (PATLHFMK) the chain is on the extracellular side. The chain crosses the membrane as a helical span at residues 427–445 (GFPFLLGALLLLIPAGIIG). At 446–463 (LIEVCEQKPMYSQFSEIS) the chain is on the cytoplasmic side.

The protein belongs to the major facilitator superfamily. SLC46A family. Monomer.

The protein resides in the cell membrane. Its subcellular location is the apical cell membrane. It is found in the basolateral cell membrane. It localises to the endosome membrane. The protein localises to the cytoplasm. It catalyses the reaction folate(in) + H(+)(in) = folate(out) + H(+)(out). The enzyme catalyses (6S)-5-methyl-5,6,7,8-tetrahydrofolate(in) + H(+)(in) = (6S)-5-methyl-5,6,7,8-tetrahydrofolate(out) + H(+)(out). It carries out the reaction methotrexate(in) + H(+)(in) = methotrexate(out) + H(+)(out). The catalysed reaction is pemetrexed(in) + H(+)(in) = pemetrexed(out) + H(+)(out). Its function is as follows. Proton-coupled folate symporter that mediates folate absorption using an H(+) gradient as a driving force. Involved in the intestinal absorption of folates at the brush-border membrane of the proximal jejunum, and the transport from blood to cerebrospinal fluid across the choroid plexus. Functions at acidic pH via alternate outward- and inward-open conformation states. Protonation of residues in the outward open state primes the protein for transport. Binding of folate promotes breaking of salt bridge network and subsequent closure of the extracellular gate, leading to the inward-open state and release of protons and folate. Also able to transport antifolate drugs, such as methotrexate and pemetrexed. Also acts as a lower-affinity, pH-independent heme carrier protein and constitutes the main importer of heme in the intestine. Imports heme in the retina and retinal pigment epithelium, in neurons of the hippocampus, in hepatocytes and in the renal epithelial cells. The polypeptide is Proton-coupled folate transporter (Xenopus laevis (African clawed frog)).